A 419-amino-acid chain; its full sequence is Innexin inx5 (419 aa).

Topologically, residues 1-21 (MFSAVKPLSKYLQFKSIRIYD) are cytoplasmic. The helical transmembrane segment at 22 to 42 (SVFTIHSRCTVVILLTCSLLL) threads the bilayer. Topologically, residues 43 to 162 (SARQYFGDPI…QTERQYLRYY (120 aa)) are extracellular. A helical transmembrane segment spans residues 163 to 183 (QWVIILLLFQSFVFYFPSCLW). Residues 184 to 238 (KVWEGRRLKQLCSEVGDALLSEETYNTRLRMLVKYFTTDYEDMHFCYMAKYVFCE) lie on the Cytoplasmic side of the membrane. Residues 239 to 259 (VLNFLISVVNIIVLEVFLNGF) traverse the membrane as a helical segment. Topologically, residues 260-320 (WSKYLRALAT…ILPLNILNEK (61 aa)) are extracellular. A helical transmembrane segment spans residues 321 to 341 (IFVFLWAWFLLMALMSGLNLL). The Cytoplasmic portion of the chain corresponds to 342–419 (CRLAMICSRY…ASGSTLESPV (78 aa)).

It belongs to the pannexin family. In terms of tissue distribution, expressed in the cortex of the pupal CNS and at low levels in the wing imaginal disk.

The protein resides in the cell membrane. It is found in the cell junction. It localises to the gap junction. In terms of biological role, structural component of the gap junctions. The chain is Innexin inx5 (Inx5) from Drosophila melanogaster (Fruit fly).